The following is a 626-amino-acid chain: Phosphomethylpyrimidine synthase (626 aa).

Residues 1 to 27 form a disordered region; sequence MSKQEKAISLSESAQVDQQSVQPLPNS. The span at 10-25 shows a compositional bias: polar residues; sequence LSESAQVDQQSVQPLP. Substrate contacts are provided by residues asparagine 232, methionine 261, tyrosine 290, histidine 326, 346–348, 387–390, and glutamate 426; these read SRG and DGLR. Zn(2+) is bound at residue histidine 430. Tyrosine 453 is a substrate binding site. Histidine 494 is a binding site for Zn(2+). 3 residues coordinate [4Fe-4S] cluster: cysteine 574, cysteine 577, and cysteine 582.

This sequence belongs to the ThiC family. As to quaternary structure, homodimer. [4Fe-4S] cluster serves as cofactor.

It catalyses the reaction 5-amino-1-(5-phospho-beta-D-ribosyl)imidazole + S-adenosyl-L-methionine = 4-amino-2-methyl-5-(phosphooxymethyl)pyrimidine + CO + 5'-deoxyadenosine + formate + L-methionine + 3 H(+). Its pathway is cofactor biosynthesis; thiamine diphosphate biosynthesis. Catalyzes the synthesis of the hydroxymethylpyrimidine phosphate (HMP-P) moiety of thiamine from aminoimidazole ribotide (AIR) in a radical S-adenosyl-L-methionine (SAM)-dependent reaction. The polypeptide is Phosphomethylpyrimidine synthase (Pseudomonas entomophila (strain L48)).